The primary structure comprises 221 residues: GTP cyclohydrolase 1 (221 aa).

Residues C109, H112, and C180 each coordinate Zn(2+).

The protein belongs to the GTP cyclohydrolase I family. Toroid-shaped homodecamer, composed of two pentamers of five dimers.

It carries out the reaction GTP + H2O = 7,8-dihydroneopterin 3'-triphosphate + formate + H(+). The protein operates within cofactor biosynthesis; 7,8-dihydroneopterin triphosphate biosynthesis; 7,8-dihydroneopterin triphosphate from GTP: step 1/1. The sequence is that of GTP cyclohydrolase 1 from Serratia proteamaculans (strain 568).